A 493-amino-acid polypeptide reads, in one-letter code: Cytochrome P450 2E1 (493 aa).

298–303 provides a ligand contact to substrate; sequence FAGTET. Cysteine 437 lines the heme pocket.

This sequence belongs to the cytochrome P450 family. In terms of assembly, interacts with chaperones HSP70 and HSP90; this interaction is required for initial targeting to mitochondria. Heme is required as a cofactor.

The protein resides in the endoplasmic reticulum membrane. It is found in the microsome membrane. Its subcellular location is the mitochondrion inner membrane. The catalysed reaction is an organic molecule + reduced [NADPH--hemoprotein reductase] + O2 = an alcohol + oxidized [NADPH--hemoprotein reductase] + H2O + H(+). It carries out the reaction (5Z,8Z,11Z)-eicosatrienoate + reduced [NADPH--hemoprotein reductase] + O2 = 19-hydroxy-(5Z,8Z,11Z)-eicosatrienoate + oxidized [NADPH--hemoprotein reductase] + H2O + H(+). It catalyses the reaction (5Z,8Z,11Z,14Z,17Z)-eicosapentaenoate + reduced [NADPH--hemoprotein reductase] + O2 = 19-hydroxy-(5Z,8Z,11Z,14Z,17Z)-eicosapentaenoate + oxidized [NADPH--hemoprotein reductase] + H2O + H(+). The enzyme catalyses (4Z,7Z,10Z,13Z,16Z,19Z)-docosahexaenoate + reduced [NADPH--hemoprotein reductase] + O2 = 21-hydroxy-(4Z,7Z,10Z,13Z,16Z,19Z)-docosahexaenoate + oxidized [NADPH--hemoprotein reductase] + H2O + H(+). The catalysed reaction is dodecanoate + reduced [NADPH--hemoprotein reductase] + O2 = 11-hydroxydodecanoate + oxidized [NADPH--hemoprotein reductase] + H2O + H(+). It carries out the reaction tetradecanoate + reduced [NADPH--hemoprotein reductase] + O2 = 13-hydroxytetradecanoate + oxidized [NADPH--hemoprotein reductase] + H2O + H(+). It catalyses the reaction 4-nitrophenol + NADPH + O2 + H(+) = 4-nitrocatechol + NADP(+) + H2O. It functions in the pathway lipid metabolism; fatty acid metabolism. The omega-1 hydroxylase activity is stimulated by cytochrome b5. In terms of biological role, a cytochrome P450 monooxygenase involved in the metabolism of fatty acids. Mechanistically, uses molecular oxygen inserting one oxygen atom into a substrate, and reducing the second into a water molecule, with two electrons provided by NADPH via cytochrome P450 reductase (NADPH--hemoprotein reductase). Catalyzes the hydroxylation of carbon-hydrogen bonds. Hydroxylates fatty acids specifically at the omega-1 position displaying the highest catalytic activity for saturated fatty acids. May be involved in the oxidative metabolism of xenobiotics. The sequence is that of Cytochrome P450 2E1 (CYP2E1) from Mesocricetus auratus (Golden hamster).